A 35-amino-acid chain; its full sequence is Photosystem I reaction center subunit Z (35 aa).

Residues 10 to 30 (LVIITTLVVPFMAAAALLFII) traverse the membrane as a helical segment.

As to quaternary structure, the G.violaceus PSI reaction center is composed of one copy each of PsaA,B,C,D,E,F,L,M and Z, and forms trimeric complexes.

Its subcellular location is the cell inner membrane. The chain is Photosystem I reaction center subunit Z (psaZ) from Gloeobacter violaceus (strain ATCC 29082 / PCC 7421).